A 174-amino-acid chain; its full sequence is UPF0200 protein PAE1629 (174 aa).

An ATP-binding site is contributed by 9–16 (GLPGSGKT).

It belongs to the UPF0200 family.

This chain is UPF0200 protein PAE1629, found in Pyrobaculum aerophilum (strain ATCC 51768 / DSM 7523 / JCM 9630 / CIP 104966 / NBRC 100827 / IM2).